A 187-amino-acid chain; its full sequence is Ion-translocating oxidoreductase complex subunit B (187 aa).

Residues 1 to 26 (MTHILFAVLVLALLALAFGIILGFAA) form a hydrophobic region. Residues 32-90 (EADPIVDQLDALLPQTQCGQCGYPGCKPYAEALANGDQINKCVPGGDATMRKIADLMGV) form the 4Fe-4S domain. Positions 49, 52, 57, 73, 115, 118, 121, 125, 145, 148, 151, and 155 each coordinate [4Fe-4S] cluster. 2 consecutive 4Fe-4S ferredoxin-type domains span residues 106 to 135 (KVAF…GATK) and 136 to 165 (AMHT…MIPV).

Belongs to the 4Fe4S bacterial-type ferredoxin family. RnfB subfamily. In terms of assembly, the complex is composed of six subunits: RnfA, RnfB, RnfC, RnfD, RnfE and RnfG. [4Fe-4S] cluster serves as cofactor.

The protein localises to the cell inner membrane. Functionally, part of a membrane-bound complex that couples electron transfer with translocation of ions across the membrane. This chain is Ion-translocating oxidoreductase complex subunit B, found in Aeromonas salmonicida (strain A449).